The primary structure comprises 142 residues: Large ribosomal subunit protein uL13 (142 aa).

The protein belongs to the universal ribosomal protein uL13 family. In terms of assembly, part of the 50S ribosomal subunit.

Its function is as follows. This protein is one of the early assembly proteins of the 50S ribosomal subunit, although it is not seen to bind rRNA by itself. It is important during the early stages of 50S assembly. The chain is Large ribosomal subunit protein uL13 from Photorhabdus laumondii subsp. laumondii (strain DSM 15139 / CIP 105565 / TT01) (Photorhabdus luminescens subsp. laumondii).